The primary structure comprises 293 residues: DegV domain-containing protein MG326 homolog (293 aa).

The DegV domain occupies 3–289; that stretch reads TAIITDSTAS…IDAFSISLLL (287 aa). Thr62 and Ser94 together coordinate hexadecanoate.

Functionally, may bind long-chain fatty acids, such as palmitate, and may play a role in lipid transport or fatty acid metabolism. This chain is DegV domain-containing protein MG326 homolog, found in Mycoplasma pneumoniae (strain ATCC 29342 / M129 / Subtype 1) (Mycoplasmoides pneumoniae).